The primary structure comprises 504 residues: Cytochrome P450 3A41 (504 aa).

Position 443 (C443) interacts with heme.

The protein belongs to the cytochrome P450 family. Requires heme as cofactor. In terms of tissue distribution, expressed in liver. Also expressed in the kidneys of female mice, with traces in the stomach, ovary, and heart of female mice and in the testis of male mice.

The protein resides in the endoplasmic reticulum membrane. It localises to the microsome membrane. It catalyses the reaction an organic molecule + reduced [NADPH--hemoprotein reductase] + O2 = an alcohol + oxidized [NADPH--hemoprotein reductase] + H2O + H(+). The protein is Cytochrome P450 3A41 (Cyp3a41a) of Mus musculus (Mouse).